We begin with the raw amino-acid sequence, 426 residues long: 5-hydroxybenzimidazole synthase BzaB (426 aa).

Substrate contacts are provided by residues M95, Y124, H163, 185–187 (SRG), 226–229 (DAIR), and E265. H269 contributes to the Zn(2+) binding site. Substrate is bound at residue F292. H333 contacts Zn(2+). Residues C407, C410, and C414 each contribute to the [4Fe-4S] cluster site.

Belongs to the ThiC family. 5-hydroxybenzimidazole synthase subfamily. Requires [4Fe-4S] cluster as cofactor.

It carries out the reaction 5-amino-1-(5-phospho-beta-D-ribosyl)imidazole + AH2 + S-adenosyl-L-methionine = 5-hydroxybenzimidazole + 5'-deoxyadenosine + formate + L-methionine + A + NH4(+) + phosphate + 2 H(+). Functionally, together with BzaA, probably catalyzes the conversion of aminoimidazole ribotide (AIR) to 5-hydroxybenzimidazole (5-HBI) in a radical S-adenosyl-L-methionine (SAM)-dependent reaction. Is thus involved in the anaerobic biosynthesis of the benzimidazole lower axial ligand of the cobamide produced by M.thermoacetica. Requires BzaA for catalytic activity, as BzaB alone displays no activity. This Moorella thermoacetica (strain ATCC 39073 / JCM 9320) protein is 5-hydroxybenzimidazole synthase BzaB.